The primary structure comprises 281 residues: Cell division protein DivIB (281 aa).

The segment at 1–36 is disordered; sequence MARKRITRRDPEEELSKFLRHEPGQGQETRKLSSQL. Residues 1 to 46 are Cytoplasmic-facing; it reads MARKRITRRDPEEELSKFLRHEPGQGQETRKLSSQLTSLKKERRRG. Basic and acidic residues predominate over residues 8-31; it reads RRDPEEELSKFLRHEPGQGQETRK. A helical membrane pass occupies residues 47–69; it reads LLTRLGSIMAVCLLAIAFLTYYV. At 70–281 the chain is on the extracellular side; that stretch reads SPLADVSTVR…SAEKKAYGLS (212 aa). The region spanning 73-144 is the POTRA domain; sequence ADVSTVRVLG…NTLNMQVHER (72 aa).

It belongs to the FtsQ/DivIB family. DivIB subfamily.

The protein resides in the cell membrane. Its function is as follows. Cell division protein that may be involved in stabilizing or promoting the assembly of the division complex. This Lactobacillus delbrueckii subsp. bulgaricus (strain ATCC 11842 / DSM 20081 / BCRC 10696 / JCM 1002 / NBRC 13953 / NCIMB 11778 / NCTC 12712 / WDCM 00102 / Lb 14) protein is Cell division protein DivIB.